A 51-amino-acid polypeptide reads, in one-letter code: Sperm protamine P1 (51 aa).

2 disulfides stabilise this stretch: C7–C15 and C40–C48.

Belongs to the protamine P1 family. Cross-linked by interchain disulfide bonds around the DNA-helix. Testis.

The protein resides in the nucleus. Its subcellular location is the chromosome. Protamines substitute for histones in the chromatin of sperm during the haploid phase of spermatogenesis. They compact sperm DNA into a highly condensed, stable and inactive complex. The chain is Sperm protamine P1 (PRM1) from Capra hircus (Goat).